The following is a 253-amino-acid chain: Light-harvesting complex stress-related protein 1, chloroplastic (253 aa).

The N-terminal 39 residues, 1–39, are a transit peptide targeting the chloroplast; sequence MAMMMRKAAAVPASSRRSVAVNSVSGKRTVSGKAGAPVP. Tyr-45 serves as a coordination point for chlorophyll b. Phe-60, Glu-81, and His-84 together coordinate chlorophyll a. Chlorophyll b is bound at residue Arg-86. A helical transmembrane segment spans residues 87 to 107; that stretch reads VAMLAALGFIVGEQLQDFPLF. Position 124 (Gln-124) interacts with chlorophyll a. The helical transmembrane segment at 131 to 151 threads the bilayer; sequence EPLLIAIGVAESYRVAVGWAT. Chlorophyll b contacts are provided by Glu-141 and Arg-144. Residues Lys-190, Glu-191, Asn-194, Arg-196, and Gln-208 each contribute to the chlorophyll a site. The chain crosses the membrane as a helical span at residues 197-217; that stretch reads LAMIAIAAFVAQELVEQTEIF.

It belongs to the light-harvesting chlorophyll a/b-binding (LHC) protein family.

It localises to the plastid. The protein localises to the chloroplast thylakoid membrane. In terms of biological role, required for non-photochemical quenching (NPQ), a mechanism that converts and dissipates the harmful excess absorbed light energy into heat and protect the photosynthetic apparatus from photo-oxidative damage. Is able to sense luminal acidification of the thylakoid membranes, which occurs along with elevated electron flow caused by excess light, and to induce a large, fast, and reversible pH-dependent quenching in LHCII-containing membranes. Mediates excitation energy transfer from light-harvesting complex II (LHCII) to photosystem I (PSI), rather than photosystem II (PSII), at low pH, which mimics the acidified lumen of the thylakoid membranes in high light-exposed chloroplasts. Activates PSI-dependent fluorescence quenching in addition to dissipating excitation energy in LHCII to avoid photooxidative stress under excess light. The protein is Light-harvesting complex stress-related protein 1, chloroplastic of Chlamydomonas reinhardtii (Chlamydomonas smithii).